Reading from the N-terminus, the 442-residue chain is Enolase 1 (442 aa).

A binds human collagen region spans residues 73-140 (KLIAKEIVGY…YNYLGGFNAH (68 aa)). Glutamine 163 provides a ligand contact to (2R)-2-phosphoglycerate. Glutamate 205 serves as the catalytic Proton donor. Mg(2+) is bound by residues aspartate 242, glutamate 290, and aspartate 317. 4 residues coordinate (2R)-2-phosphoglycerate: lysine 342, arginine 371, serine 372, and lysine 393. Lysine 342 (proton acceptor) is an active-site residue.

The protein belongs to the enolase family. Requires Mg(2+) as cofactor.

The protein localises to the cytoplasm. It is found in the secreted. It localises to the cell surface. The catalysed reaction is (2R)-2-phosphoglycerate = phosphoenolpyruvate + H2O. It participates in carbohydrate degradation; glycolysis; pyruvate from D-glyceraldehyde 3-phosphate: step 4/5. Catalyzes the reversible conversion of 2-phosphoglycerate (2-PG) into phosphoenolpyruvate (PEP). It is essential for the degradation of carbohydrates via glycolysis. Functionally, 'Moonlights' as a collagen receptor. Binds host (human) collagen, which may contribute to pathogenicity. The protein is Enolase 1 of Lactiplantibacillus plantarum (strain ATCC BAA-793 / NCIMB 8826 / WCFS1) (Lactobacillus plantarum).